The chain runs to 313 residues: 3-ketodihydrosphingosine reductase TSC10 (313 aa).

Leu12 lines the NADP(+) pocket. NADPH-binding residues include Gly15, Ser17, and Gly19. The short motif at 15 to 19 (GGSQG) is the GXSXG element. Leu20 serves as a coordination point for NADP(+). Residues Arg47, Lys51, and Asp86 each coordinate NADPH. NADP(+) is bound at residue Asp86. Residue Ser160 is the Proton donor of the active site. NADP(+) is bound by residues Tyr174, Lys178, and Ser207. The Proton acceptor role is filled by Tyr174. The active-site Lowers pKa of active site Tyr is the Lys178. Residues 278–298 (VFSWILGALLNITIVPIYMLI) traverse the membrane as a helical segment.

This sequence belongs to the short-chain dehydrogenases/reductases (SDR) family.

It is found in the endoplasmic reticulum membrane. The enzyme catalyses sphinganine + NADP(+) = 3-oxosphinganine + NADPH + H(+). Its pathway is lipid metabolism; sphingolipid metabolism. Functionally, catalyzes the reduction of 3'-oxosphinganine (3-ketodihydrosphingosine/KDS) to sphinganine (dihydrosphingosine/DHS), the second step of de novo sphingolipid biosynthesis. The chain is 3-ketodihydrosphingosine reductase TSC10 (TSC10) from Kluyveromyces lactis (strain ATCC 8585 / CBS 2359 / DSM 70799 / NBRC 1267 / NRRL Y-1140 / WM37) (Yeast).